Reading from the N-terminus, the 283-residue chain is Protein/nucleic acid deglycase HchA (283 aa).

Zn(2+) is bound by residues His-86, Glu-91, and His-123. The active-site Nucleophile is Cys-185.

Belongs to the peptidase C56 family. HchA subfamily. As to quaternary structure, homodimer.

Its subcellular location is the cytoplasm. It carries out the reaction N(omega)-(1-hydroxy-2-oxopropyl)-L-arginyl-[protein] + H2O = lactate + L-arginyl-[protein] + H(+). The catalysed reaction is N(6)-(1-hydroxy-2-oxopropyl)-L-lysyl-[protein] + H2O = lactate + L-lysyl-[protein] + H(+). The enzyme catalyses S-(1-hydroxy-2-oxopropyl)-L-cysteinyl-[protein] + H2O = lactate + L-cysteinyl-[protein] + H(+). It catalyses the reaction N(omega)-(1-hydroxy-2-oxoethyl)-L-arginyl-[protein] + H2O = L-arginyl-[protein] + glycolate + H(+). It carries out the reaction N(6)-(1-hydroxy-2-oxoethyl)-L-lysyl-[protein] + H2O = glycolate + L-lysyl-[protein] + H(+). The catalysed reaction is S-(1-hydroxy-2-oxoethyl)-L-cysteinyl-[protein] + H2O = glycolate + L-cysteinyl-[protein] + H(+). The enzyme catalyses N(2)-(1-hydroxy-2-oxopropyl)-dGTP + H2O = lactate + dGTP + H(+). It catalyses the reaction N(2)-(1-hydroxy-2-oxopropyl)-GTP + H2O = lactate + GTP + H(+). It carries out the reaction N(2)-(1-hydroxy-2-oxopropyl)-GDP + H2O = lactate + GDP + H(+). The catalysed reaction is N(2)-(1-hydroxy-2-oxopropyl)-GMP + H2O = lactate + GMP + H(+). The enzyme catalyses N(2)-(1-hydroxy-2-oxoethyl)-dGTP + H2O = dGTP + glycolate + H(+). It catalyses the reaction N(2)-(1-hydroxy-2-oxoethyl)-GTP + H2O = glycolate + GTP + H(+). It carries out the reaction N(2)-(1-hydroxy-2-oxoethyl)-GDP + H2O = glycolate + GDP + H(+). The catalysed reaction is N(2)-(1-hydroxy-2-oxoethyl)-GMP + H2O = glycolate + GMP + H(+). The enzyme catalyses an N(2)-(1-hydroxy-2-oxopropyl)-guanosine in RNA + H2O = a guanosine in RNA + lactate + H(+). It catalyses the reaction an N(2)-(1-hydroxy-2-oxopropyl)-2'-deoxyguanosine in DNA + H2O = a 2'-deoxyguanosine in DNA + lactate + H(+). It carries out the reaction an N(2)-(1-hydroxy-2-oxoethyl)-guanosine in RNA + H2O = a guanosine in RNA + glycolate + H(+). The catalysed reaction is an N(2)-(1-hydroxy-2-oxoethyl)-2'-deoxyguanosine in DNA + H2O = a 2'-deoxyguanosine in DNA + glycolate + H(+). Functionally, protein and nucleotide deglycase that catalyzes the deglycation of the Maillard adducts formed between amino groups of proteins or nucleotides and reactive carbonyl groups of glyoxals. Thus, functions as a protein deglycase that repairs methylglyoxal- and glyoxal-glycated proteins, and releases repaired proteins and lactate or glycolate, respectively. Deglycates cysteine, arginine and lysine residues in proteins, and thus reactivates these proteins by reversing glycation by glyoxals. Acts on early glycation intermediates (hemithioacetals and aminocarbinols), preventing the formation of Schiff bases and advanced glycation endproducts (AGE). Also functions as a nucleotide deglycase able to repair glycated guanine in the free nucleotide pool (GTP, GDP, GMP, dGTP) and in DNA and RNA. Is thus involved in a major nucleotide repair system named guanine glycation repair (GG repair), dedicated to reversing methylglyoxal and glyoxal damage via nucleotide sanitization and direct nucleic acid repair. Plays an important role in protecting cells from carbonyl stress. The sequence is that of Protein/nucleic acid deglycase HchA from Shigella flexneri.